The following is a 484-amino-acid chain: Threonine synthase-like 2 (484 aa).

At Lys-113 the chain carries N6-(pyridoxal phosphate)lysine.

Belongs to the threonine synthase family. It depends on pyridoxal 5'-phosphate as a cofactor.

Functionally, acts as a catabolic phospho-lyase on both gamma- and beta-phosphorylated substrates. Degrades O-phospho-threonine (PThr) to alpha-ketobutyrate, ammonia and phosphate. The polypeptide is Threonine synthase-like 2 (THNSL2) (Pongo abelii (Sumatran orangutan)).